Reading from the N-terminus, the 462-residue chain is L-seryl-tRNA(Sec) selenium transferase (462 aa).

Lys293 is subject to N6-(pyridoxal phosphate)lysine.

This sequence belongs to the SelA family. It depends on pyridoxal 5'-phosphate as a cofactor.

Its subcellular location is the cytoplasm. It catalyses the reaction L-seryl-tRNA(Sec) + selenophosphate + H(+) = L-selenocysteinyl-tRNA(Sec) + phosphate. It participates in aminoacyl-tRNA biosynthesis; selenocysteinyl-tRNA(Sec) biosynthesis; selenocysteinyl-tRNA(Sec) from L-seryl-tRNA(Sec) (bacterial route): step 1/1. Functionally, converts seryl-tRNA(Sec) to selenocysteinyl-tRNA(Sec) required for selenoprotein biosynthesis. The chain is L-seryl-tRNA(Sec) selenium transferase from Clostridium botulinum (strain Langeland / NCTC 10281 / Type F).